Consider the following 603-residue polypeptide: NADH-ubiquinone oxidoreductase chain 5 (603 aa).

14 helical membrane passes run 4–24 (YTSIMLMTLASLALPIFATLV), 36–56 (VKTTMMYAFITSLIPTTLYIF), 87–107 (MMFIPIALFITWSIMEFSLWY), 122–142 (LIFLITMLILITANNLFQLFI), 171–191 (AVLYNRIGDIGLILAMVWFLL), 211–233 (LPLMGLLLAAVGKSAQFGLHPWL), 241–261 (TPVSALLHSSTMVVAGVFLLI), 272–292 (LTQNLTLCLGAITTLFMAMCA), 301–320 (IVAFSTSSQLGLMMITIGIN), 325–347 (AFLHICTHAFFKAMLFICSGSII), 370–390 (STSLIIGNLALTGIPFLTGFY), 406–422 (AWALSITLIATSLTSAY), 488–508 (LLALYMTALGFIITLDLTLMT), and 583–603 (MIKLYFLSFLIPLALALLLMV).

It belongs to the complex I subunit 5 family. In terms of assembly, core subunit of respiratory chain NADH dehydrogenase (Complex I) which is composed of 45 different subunits.

The protein localises to the mitochondrion inner membrane. It catalyses the reaction a ubiquinone + NADH + 5 H(+)(in) = a ubiquinol + NAD(+) + 4 H(+)(out). Functionally, core subunit of the mitochondrial membrane respiratory chain NADH dehydrogenase (Complex I) which catalyzes electron transfer from NADH through the respiratory chain, using ubiquinone as an electron acceptor. Essential for the catalytic activity and assembly of complex I. The polypeptide is NADH-ubiquinone oxidoreductase chain 5 (MT-ND5) (Papio hamadryas (Hamadryas baboon)).